The sequence spans 944 residues: Putative alpha,alpha-trehalose-phosphate synthase [UDP-forming] 106 kDa subunit (944 aa).

Residues 73–84 (TNAQSNIATPSP) are compositionally biased toward polar residues. Disordered regions lie at residues 73–113 (TNAQ…NSLS) and 129–166 (SKNDGTNLSLPPSRHQSPPPSSVLASQRHHRRHDSELE). A compositionally biased stretch (low complexity) spans 101–113 (PSSDSPSLENSLS). Ser141, Ser145, Ser149, Ser150, Ser163, and Ser177 each carry phosphoserine. Positions 173-652 (SRSLSFSMNG…AVTFQSLIKE (480 aa)) are glycosyltransferase. At Thr189 the chain carries Phosphothreonine.

In the N-terminal section; belongs to the glycosyltransferase 20 family.

It catalyses the reaction D-glucose 6-phosphate + UDP-alpha-D-glucose = alpha,alpha-trehalose 6-phosphate + UDP + H(+). This chain is Putative alpha,alpha-trehalose-phosphate synthase [UDP-forming] 106 kDa subunit, found in Schizosaccharomyces pombe (strain 972 / ATCC 24843) (Fission yeast).